Reading from the N-terminus, the 478-residue chain is Probable cytosol aminopeptidase (478 aa).

Residues lysine 244 and aspartate 249 each contribute to the Mn(2+) site. Residue lysine 256 is part of the active site. Aspartate 267, aspartate 326, and glutamate 328 together coordinate Mn(2+). Arginine 330 is a catalytic residue.

This sequence belongs to the peptidase M17 family. The cofactor is Mn(2+).

The protein resides in the cytoplasm. It carries out the reaction Release of an N-terminal amino acid, Xaa-|-Yaa-, in which Xaa is preferably Leu, but may be other amino acids including Pro although not Arg or Lys, and Yaa may be Pro. Amino acid amides and methyl esters are also readily hydrolyzed, but rates on arylamides are exceedingly low.. It catalyses the reaction Release of an N-terminal amino acid, preferentially leucine, but not glutamic or aspartic acids.. In terms of biological role, presumably involved in the processing and regular turnover of intracellular proteins. Catalyzes the removal of unsubstituted N-terminal amino acids from various peptides. The chain is Probable cytosol aminopeptidase from Fusobacterium nucleatum subsp. nucleatum (strain ATCC 25586 / DSM 15643 / BCRC 10681 / CIP 101130 / JCM 8532 / KCTC 2640 / LMG 13131 / VPI 4355).